The primary structure comprises 307 residues: Branched-chain-amino-acid aminotransferase (307 aa).

K160 is subject to N6-(pyridoxal phosphate)lysine.

The protein belongs to the class-IV pyridoxal-phosphate-dependent aminotransferase family. Pyridoxal 5'-phosphate serves as cofactor.

It carries out the reaction L-leucine + 2-oxoglutarate = 4-methyl-2-oxopentanoate + L-glutamate. It catalyses the reaction L-isoleucine + 2-oxoglutarate = (S)-3-methyl-2-oxopentanoate + L-glutamate. The catalysed reaction is L-valine + 2-oxoglutarate = 3-methyl-2-oxobutanoate + L-glutamate. It functions in the pathway amino-acid biosynthesis; L-isoleucine biosynthesis; L-isoleucine from 2-oxobutanoate: step 4/4. Its pathway is amino-acid biosynthesis; L-leucine biosynthesis; L-leucine from 3-methyl-2-oxobutanoate: step 4/4. The protein operates within amino-acid biosynthesis; L-valine biosynthesis; L-valine from pyruvate: step 4/4. Acts on leucine, isoleucine and valine. This chain is Branched-chain-amino-acid aminotransferase (ilvE), found in Pseudomonas aeruginosa (strain ATCC 15692 / DSM 22644 / CIP 104116 / JCM 14847 / LMG 12228 / 1C / PRS 101 / PAO1).